A 469-amino-acid chain; its full sequence is Interstitial collagenase (469 aa).

Residues methionine 1–glycine 18 form the signal peptide. The propeptide at phenylalanine 19–proline 99 is activation peptide. The Cysteine switch motif lies at proline 90–valine 97. Cysteine 92 is a Zn(2+) binding site. Asparagine 120 carries N-linked (GlcNAc...) asparagine glycosylation. Ca(2+) contacts are provided by aspartate 124 and aspartate 158. Zn(2+) contacts are provided by histidine 168 and aspartate 170. The Ca(2+) site is built by aspartate 175, glycine 176, glycine 178, and asparagine 180. Histidine 183 contacts Zn(2+). Positions 190, 192, and 194 each coordinate Ca(2+). Position 196 (histidine 196) interacts with Zn(2+). Ca(2+)-binding residues include aspartate 198, aspartate 199, and glutamate 201. Histidine 218 is a binding site for Zn(2+). Glutamate 219 is a catalytic residue. Zn(2+) contacts are provided by histidine 222 and histidine 228. Threonine 274 is subject to Phosphothreonine. 4 Hemopexin repeats span residues proline 275–leucine 324, proline 325–proline 371, valine 374–isoleucine 422, and glycine 423–cysteine 466. Cysteine 278 and cysteine 466 are disulfide-bonded. Residues aspartate 285 and glutamine 329 each coordinate Ca(2+). Tyrosine 360 carries the post-translational modification Phosphotyrosine; by PKDCC. Ca(2+) is bound by residues aspartate 378 and aspartate 427.

Belongs to the peptidase M10A family. Ca(2+) is required as a cofactor. Requires Zn(2+) as cofactor. Tyrosine phosphorylated in platelets by PKDCC/VLK.

The protein localises to the secreted. The protein resides in the extracellular space. It localises to the extracellular matrix. It carries out the reaction Cleavage of the triple helix of collagen at about three-quarters of the length of the molecule from the N-terminus, at 775-Gly-|-Ile-776 in the alpha1(I) chain. Cleaves synthetic substrates and alpha-macroglobulins at bonds where P1' is a hydrophobic residue.. Can be activated without removal of the activation peptide. Cleaves collagens of types I, II, and III at one site in the helical domain. Also cleaves collagens of types VII and X. The polypeptide is Interstitial collagenase (MMP1) (Bos taurus (Bovine)).